A 335-amino-acid polypeptide reads, in one-letter code: Gibberellin 2-beta-dioxygenase 3 (335 aa).

The region spanning 175-278 is the Fe2OG dioxygenase domain; sequence ESDSCLRMNH…RISMIYFAGP (104 aa). His202, Asp204, and His259 together coordinate Fe cation. The active site involves Arg269.

This sequence belongs to the iron/ascorbate-dependent oxidoreductase family. GA2OX subfamily. Requires Fe(2+) as cofactor. In terms of tissue distribution, not expressed in the apex.

The enzyme catalyses gibberellin A1 + 2-oxoglutarate + O2 = gibberellin A8 + succinate + CO2. It participates in plant hormone biosynthesis; gibberellin biosynthesis. Its function is as follows. Catalyzes the 2-beta-hydroxylation of several biologically active gibberellins, leading to the homeostatic regulation of their endogenous level. Catabolism of gibberellins (GAs) plays a central role in plant development. Converts GA9/GA20 to GA51/GA29 and GA4/GA1 to GA34/GA8. The polypeptide is Gibberellin 2-beta-dioxygenase 3 (GA2OX3) (Arabidopsis thaliana (Mouse-ear cress)).